We begin with the raw amino-acid sequence, 311 residues long: Malate dehydrogenase (311 aa).

NAD(+)-binding positions include 7–13 (GAAGGIG) and Asp-34. Substrate-binding residues include Arg-81 and Arg-87. NAD(+)-binding positions include Asn-94 and 117 to 119 (ITN). Substrate-binding residues include Asn-119 and Arg-153. His-177 (proton acceptor) is an active-site residue. Position 227 (Met-227) interacts with NAD(+).

This sequence belongs to the LDH/MDH superfamily. MDH type 1 family. Homodimer.

The catalysed reaction is (S)-malate + NAD(+) = oxaloacetate + NADH + H(+). Catalyzes the reversible oxidation of malate to oxaloacetate. This chain is Malate dehydrogenase, found in Shewanella woodyi (strain ATCC 51908 / MS32).